Reading from the N-terminus, the 578-residue chain is Vacuolar protein 8 (578 aa).

ARM repeat units lie at residues 58–95 (NRAE…FAEI), 96–135 (TERD…NLAV), 137–176 (ADNK…NLAT), 178–217 (EDNK…NMTH), 219–258 (DDNR…NIAV), 262–301 (NRKR…NLAS), 303–342 (EKYQ…NISI), 344–384 (PLNE…NLAA), and 428–467 (DELK…NLSS).

Belongs to the beta-catenin family.

Its subcellular location is the vacuole membrane. In terms of biological role, functions in both vacuole inheritance and protein targeting from the cytoplasm to vacuole. This is Vacuolar protein 8 (vac8) from Aspergillus oryzae (strain ATCC 42149 / RIB 40) (Yellow koji mold).